The chain runs to 1017 residues: Probable calcium-transporting ATPase 8, plasma membrane-type (1017 aa).

Residues 1–153 are Cytoplasmic-facing; the sequence is MEKLDRYLQE…FVWDAFQDMT (153 aa). Transmembrane regions (helical) follow at residues 154–174 and 177–197; these read LIIL…TEGW and GMYD…VTAV. At 198–228 the chain is on the cytoplasmic side; that stretch reads SDYKQSLQFKELDNEKKKIFIHVTRDGRRQK. Helical transmembrane passes span 229 to 249 and 331 to 351; these read ISIY…DQVP and VATV…LVLL. Residues 352-384 lie on the Cytoplasmic side of the membrane; it reads VRFLIDKGMTVGLLKWYSTDALTIVNYFATAVT. The helical transmembrane segment at 385 to 405 threads the bilayer; it reads IIVVAVPEGLPLAVTLSLAFA. Aspartate 434 functions as the 4-aspartylphosphate intermediate in the catalytic mechanism. 2 residues coordinate Mg(2+): aspartate 736 and aspartate 740. The helical transmembrane segment at 803-823 threads the bilayer; that stretch reads IVALVINFVSACITGSAPLTA. Topologically, residues 824–825 are cytoplasmic; it reads VQ. 2 helical membrane-spanning segments follow: residues 826–846 and 875–895; these read LLWV…TEPP and SLYQ…LLNI. At 896–938 the chain is on the cytoplasmic side; the sequence is KGADSKSIINTLIFNSFVFCQVFNEINSREMQKINVFRGIISN. The next 2 membrane-spanning stretches (helical) occupy residues 939-959 and 973-993; these read WIFI…IEFL and WLLS…LKCI. Residues 994–1017 are Cytoplasmic-facing; the sequence is PVGSGETSATPNGYRPLANGPDDI.

Belongs to the cation transport ATPase (P-type) (TC 3.A.3) family. Type IIB subfamily.

It localises to the membrane. The enzyme catalyses Ca(2+)(in) + ATP + H2O = Ca(2+)(out) + ADP + phosphate + H(+). With respect to regulation, activated by calmodulin. Its function is as follows. This magnesium-dependent enzyme catalyzes the hydrolysis of ATP coupled with the translocation of calcium from the cytosol out of the cell, into the endoplasmic reticulum, or into organelles. This is Probable calcium-transporting ATPase 8, plasma membrane-type from Oryza sativa subsp. japonica (Rice).